Consider the following 627-residue polypeptide: Interferon-induced GTP-binding protein MxB (627 aa).

Residues 34 to 307 (DLALPAIAVI…LVHHIQRSLP (274 aa)) form the Dynamin-type G domain. The G1 motif stretch occupies residues 44–51 (GDQSSGKS). 44-51 (GDQSSGKS) lines the GTP pocket. A G2 motif region spans residues 69 to 71 (VTR). A G3 motif region spans residues 145 to 148 (DLPG). Residues 145 to 149 (DLPGI) and 214 to 217 (TKPD) each bind GTP. The interval 214–217 (TKPD) is G4 motif. The interval 246 to 249 (RCRG) is G5 motif. Residues 541 to 627 (LSEMKLHLES…MKAQNLLATY (87 aa)) form the GED domain.

The protein belongs to the TRAFAC class dynamin-like GTPase superfamily. Dynamin/Fzo/YdjA family.

The protein localises to the cytoplasm. This is Interferon-induced GTP-binding protein MxB (mxb) from Danio rerio (Zebrafish).